Consider the following 617-residue polypeptide: Vitamin B12 transporter BtuB (617 aa).

The N-terminal stretch at 1–22 is a signal peptide; that stretch reads MRKTFLAITCASLLSPTFYSQA. The TonB box signature appears at 29–36; it reads ETVVVTAN. The TBDR plug domain maps to 40-154; it reads QIDGAVLAQT…ISGVINIITR (115 aa). Residues 159 to 617 form the TBDR beta-barrel domain; sequence DDSGRVSAGY…QYFVSADYRF (459 aa). Positions 600 to 617 match the TonB C-terminal box motif; it reads VGYVTPGRQYFVSADYRF.

This sequence belongs to the TonB-dependent receptor family. BtuB (TC 1.B.14.3.1) subfamily.

The protein localises to the cell outer membrane. Involved in the active translocation of vitamin B12 (cyanocobalamin) across the outer membrane to the periplasmic space. It derives its energy for transport by interacting with the trans-periplasmic membrane protein TonB. This Vibrio campbellii (strain ATCC BAA-1116) protein is Vitamin B12 transporter BtuB.